Here is a 245-residue protein sequence, read N- to C-terminus: tRNA1(Val) (adenine(37)-N6)-methyltransferase (245 aa).

Belongs to the methyltransferase superfamily. tRNA (adenine-N(6)-)-methyltransferase family.

Its subcellular location is the cytoplasm. It carries out the reaction adenosine(37) in tRNA1(Val) + S-adenosyl-L-methionine = N(6)-methyladenosine(37) in tRNA1(Val) + S-adenosyl-L-homocysteine + H(+). Functionally, specifically methylates the adenine in position 37 of tRNA(1)(Val) (anticodon cmo5UAC). The polypeptide is tRNA1(Val) (adenine(37)-N6)-methyltransferase (Erwinia tasmaniensis (strain DSM 17950 / CFBP 7177 / CIP 109463 / NCPPB 4357 / Et1/99)).